We begin with the raw amino-acid sequence, 468 residues long: ATP synthase subunit beta (468 aa).

148–155 (GGAGVGKT) is an ATP binding site.

It belongs to the ATPase alpha/beta chains family. F-type ATPases have 2 components, CF(1) - the catalytic core - and CF(0) - the membrane proton channel. CF(1) has five subunits: alpha(3), beta(3), gamma(1), delta(1), epsilon(1). CF(0) has three main subunits: a(1), b(2) and c(9-12). The alpha and beta chains form an alternating ring which encloses part of the gamma chain. CF(1) is attached to CF(0) by a central stalk formed by the gamma and epsilon chains, while a peripheral stalk is formed by the delta and b chains.

The protein localises to the cell inner membrane. It catalyses the reaction ATP + H2O + 4 H(+)(in) = ADP + phosphate + 5 H(+)(out). Produces ATP from ADP in the presence of a proton gradient across the membrane. The catalytic sites are hosted primarily by the beta subunits. The sequence is that of ATP synthase subunit beta from Xanthomonas campestris pv. campestris (strain B100).